The chain runs to 246 residues: UDP-N-acetyl-D-mannosaminuronic acid transferase (246 aa).

This sequence belongs to the glycosyltransferase 26 family.

The enzyme catalyses UDP-N-acetyl-alpha-D-mannosaminouronate + N-acetyl-alpha-D-glucosaminyl-di-trans,octa-cis-undecaprenyl diphosphate = beta-D-ManNAcA-(1-&gt;4)-alpha-D-GlcNAc-di-trans,octa-cis-undecaprenyl diphosphate + UDP + H(+). It participates in bacterial outer membrane biogenesis; enterobacterial common antigen biosynthesis. Catalyzes the synthesis of Und-PP-GlcNAc-ManNAcA (Lipid II), the second lipid-linked intermediate involved in enterobacterial common antigen (ECA) synthesis. The polypeptide is UDP-N-acetyl-D-mannosaminuronic acid transferase (Escherichia coli (strain ATCC 8739 / DSM 1576 / NBRC 3972 / NCIMB 8545 / WDCM 00012 / Crooks)).